The chain runs to 247 residues: Adenosylcobinamide-GDP ribazoletransferase (247 aa).

5 helical membrane-spanning segments follow: residues 34 to 54 (IITF…VFMV), 57 to 77 (AWCG…LMTG), 113 to 133 (GGLA…ELAL), 138 to 158 (ILAS…LLMY), and 194 to 214 (VLLL…AIFI).

The protein belongs to the CobS family. Mg(2+) serves as cofactor.

The protein localises to the cell inner membrane. It catalyses the reaction alpha-ribazole + adenosylcob(III)inamide-GDP = adenosylcob(III)alamin + GMP + H(+). It carries out the reaction alpha-ribazole 5'-phosphate + adenosylcob(III)inamide-GDP = adenosylcob(III)alamin 5'-phosphate + GMP + H(+). The protein operates within cofactor biosynthesis; adenosylcobalamin biosynthesis; adenosylcobalamin from cob(II)yrinate a,c-diamide: step 7/7. Its function is as follows. Joins adenosylcobinamide-GDP and alpha-ribazole to generate adenosylcobalamin (Ado-cobalamin). Also synthesizes adenosylcobalamin 5'-phosphate from adenosylcobinamide-GDP and alpha-ribazole 5'-phosphate. The protein is Adenosylcobinamide-GDP ribazoletransferase of Shigella flexneri.